The chain runs to 910 residues: Alanine--tRNA ligase (910 aa).

Over residues 488-505 (RHEEKKEDSKSEKGENTA) the composition is skewed to basic and acidic residues. A disordered region spans residues 488–507 (RHEEKKEDSKSEKGENTAEK). 4 residues coordinate Zn(2+): H614, H618, C718, and H722.

Belongs to the class-II aminoacyl-tRNA synthetase family. Zn(2+) serves as cofactor.

The protein resides in the cytoplasm. It catalyses the reaction tRNA(Ala) + L-alanine + ATP = L-alanyl-tRNA(Ala) + AMP + diphosphate. Its function is as follows. Catalyzes the attachment of alanine to tRNA(Ala) in a two-step reaction: alanine is first activated by ATP to form Ala-AMP and then transferred to the acceptor end of tRNA(Ala). Also edits incorrectly charged Ser-tRNA(Ala) and Gly-tRNA(Ala) via its editing domain. The polypeptide is Alanine--tRNA ligase (Methanococcus aeolicus (strain ATCC BAA-1280 / DSM 17508 / OCM 812 / Nankai-3)).